The sequence spans 599 residues: Elongation factor 4 (599 aa).

Positions 2 to 184 (KNIRNFSIIA…RLVRDIPPPE (183 aa)) constitute a tr-type G domain. Residues 14–19 (DHGKST) and 131–134 (NKID) contribute to the GTP site.

This sequence belongs to the TRAFAC class translation factor GTPase superfamily. Classic translation factor GTPase family. LepA subfamily.

The protein resides in the cell inner membrane. The catalysed reaction is GTP + H2O = GDP + phosphate + H(+). Its function is as follows. Required for accurate and efficient protein synthesis under certain stress conditions. May act as a fidelity factor of the translation reaction, by catalyzing a one-codon backward translocation of tRNAs on improperly translocated ribosomes. Back-translocation proceeds from a post-translocation (POST) complex to a pre-translocation (PRE) complex, thus giving elongation factor G a second chance to translocate the tRNAs correctly. Binds to ribosomes in a GTP-dependent manner. The polypeptide is Elongation factor 4 (Sodalis glossinidius (strain morsitans)).